Reading from the N-terminus, the 459-residue chain is MAQNFSTVGDGKQMLLERDSSKRVLTGCFLSLLIFTTLLGNTLVCVAVTKFRHLRSKVTNFFVISLAISDLLVAILVMPWKAATEIMGFWPFGEFCNIWVAFDIMCSTASILNLCVISVDRYWAISSPFRYERKMTPKVACLMISVAWTLSVLISFIPVQLNWHKAQTASYVELNGTYAGDLPPDNCDSSLNRTYAISSSLISFYIPVAIMIVTYTRIYRIAQKQIRRISALERAAESAQNRHSSMGNSLSMESECSFKMSFKRETKVLKTLSVIMGVFVCCWLPFFILNCMVPFCEADDTTDFPCISSTTFDVFVWFGWANSSLNPIIYAFNADFRKAFSILLGCHRLCPGNSAIEIVSINNTGAPLSNPSCQYQPKSHIPKEGNHSSSYVIPHSILCQEEELQKKDGFGGEMEVGLVNNAMEKVSPAISGNFDSDAAVTLETINPITQNGQHKSMSC.

At 1–23 the chain is on the extracellular side; that stretch reads MAQNFSTVGDGKQMLLERDSSKR. A glycan (N-linked (GlcNAc...) asparagine) is linked at Asn4. Residues 24–49 traverse the membrane as a helical segment; that stretch reads VLTGCFLSLLIFTTLLGNTLVCVAVT. The Cytoplasmic portion of the chain corresponds to 50-60; it reads KFRHLRSKVTN. A helical transmembrane segment spans residues 61–87; the sequence is FFVISLAISDLLVAILVMPWKAATEIM. The Extracellular portion of the chain corresponds to 88 to 96; it reads GFWPFGEFC. Cys96 and Cys187 are disulfide-bonded. Residues 97–119 traverse the membrane as a helical segment; it reads NIWVAFDIMCSTASILNLCVISV. The Cytoplasmic segment spans residues 120 to 138; the sequence is DRYWAISSPFRYERKMTPK. The helical transmembrane segment at 139 to 164 threads the bilayer; it reads VACLMISVAWTLSVLISFIPVQLNWH. Topologically, residues 165 to 191 are extracellular; that stretch reads KAQTASYVELNGTYAGDLPPDNCDSSL. The chain crosses the membrane as a helical span at residues 192–216; sequence NRTYAISSSLISFYIPVAIMIVTYT. The Cytoplasmic segment spans residues 217–269; the sequence is RIYRIAQKQIRRISALERAAESAQNRHSSMGNSLSMESECSFKMSFKRETKVL. A helical transmembrane segment spans residues 270-297; that stretch reads KTLSVIMGVFVCCWLPFFILNCMVPFCE. The Extracellular portion of the chain corresponds to 298 to 311; the sequence is ADDTTDFPCISSTT. A helical transmembrane segment spans residues 312 to 333; the sequence is FDVFVWFGWANSSLNPIIYAFN. The Cytoplasmic portion of the chain corresponds to 334 to 459; it reads ADFRKAFSIL…QNGQHKSMSC (126 aa).

The protein belongs to the G-protein coupled receptor 1 family.

It localises to the cell membrane. Its subcellular location is the cell projection. It is found in the cilium membrane. Receptor for dopamine. The chain is D(1)-like dopamine receptor (d14) from Takifugu rubripes (Japanese pufferfish).